Here is a 229-residue protein sequence, read N- to C-terminus: Sperm flagellar protein 1 (229 aa).

Residues 7-115 form the Calponin-homology (CH) domain; sequence EETMQELYTW…TLRQKIEEKQ (109 aa). The interval 122-169 is disordered; sequence ADLSQDQATQNNGNTHSDKGYKSNGTELSPRQGARVDPASKTHQGYAQ. The segment covering 123-136 has biased composition (polar residues); it reads DLSQDQATQNNGNT. Residues 178–229 are essential for homodimerization and microtubule bundling activity; sequence RFQLAEKEQTLILSQETIQILQAKLRRLEQLLLLKNVRIDDLTRRLQELEKK.

As to quaternary structure, homodimer.

Its subcellular location is the cytoplasm. The protein resides in the cytoskeleton. It localises to the cilium axoneme. It is found in the apical cell membrane. Functionally, microtubule-associated protein involved in the stabilization of microtubules along the axis of migration during radial intercalation. Promotes the establishment and stabilization of an axis of microtubules required for the active migration of cells into the outer epithelium. Microtubule-associated protein that promotes microtubule bundling and stabilizes microtubules against depolymerization in response to cold shock. Essential for ciliary central apparatus formation which requires both its microtubule-binding and bundling activities. Regulates planar cell polarity signaling pathway and asymmetric microtubule accumulation in ciliated epithelia. The chain is Sperm flagellar protein 1 from Xenopus laevis (African clawed frog).